We begin with the raw amino-acid sequence, 174 residues long: Regenerating islet-derived protein 3-gamma (174 aa).

The signal sequence occupies residues methionine 1–glycine 26. A propeptide spanning residues glutamate 27 to arginine 37 is cleaved from the precursor. 3 cysteine pairs are disulfide-bonded: cysteine 40-cysteine 51, cysteine 68-cysteine 170, and cysteine 145-cysteine 162. The region spanning tyrosine 47–lysine 171 is the C-type lectin domain. A sufficient to activate EXTL3 region spans residues tryptophan 103 to glycine 118. Zn(2+) is bound at residue histidine 107. The short motif at glutamate 114–asparagine 116 is the EPN element. Residues glutamate 121 and histidine 144 each coordinate Zn(2+).

Forms a hexameric membrane-permeabilizing oligomeric pore on membrane phospholipids. The hexamer is formed by three dimers related by helical symmetry. Forms filaments, filamentation traps pore complexes and limits damage to host cells. Interacts with EXTL3. Post-translationally, proteolytic processing by trypsin removes an inhibitory N-terminal propeptide and is essential for peptidoglycan binding and antibacterial activity. As to expression, predominantly expressed in the small intestine, including Paneth cells (at protein level). Hardly detectable in the colon (at protein level). Highly expressed in the lung epithelium during methicillin-resistant S.aureus infection and allergic airway inflammation (at protein level). Skin injury increases its epidermal expression. Also expressed in the pancreas. Expressed by nocireceptors.

It is found in the secreted. The protein localises to the cytoplasm. Lipopolysaccharide inhibits pore-forming activity, explaining why is bactericidal for Gram-positive but not Gram-negative bacteria. Its function is as follows. Bactericidal C-type lectin which acts exclusively against Gram-positive bacteria and mediates bacterial killing by binding to surface-exposed carbohydrate moieties of peptidoglycan. Restricts bacterial colonization of the intestinal epithelial surface and consequently limits activation of adaptive immune responses by the microbiota. Functionally, acts as a hormone in response to different stimuli like anti-inflammatory signals, such as IL17A, or gut microbiome. Is secreted by different cell types to activate its receptor EXTL3 and induce cell specific signaling pathways. Induced by IL17A in keratinocytes, regulates keratinocyte proliferation and differentiation after skin injury. In parallel, inhibits skin inflammation through the inhibition of inflammatory cytokines such as IL6 and TNF. Induced by IL22 in lung epithelial cells, inhibits cytokine production and regulates allergic airway inflammation. Induced in small intestine by inulin-enriched diet and Lactobacillus gasseri enriched microbiome, plays a role in the improvement of gut barrier function, the regulation of energy balance and glucose levels. Modulates microbiota composition in duodenal contents. Produced by nociceptor in response to endotoxins, prevents endotoxic death by targeting kynurenine pathway in microglia. Has bacteriostatic activity. In terms of biological role, has bactericidal activity against L.monocytogenes and methicillin-resistant S.aureus. In Mus musculus (Mouse), this protein is Regenerating islet-derived protein 3-gamma.